A 203-amino-acid chain; its full sequence is Dephospho-CoA kinase (203 aa).

In terms of domain architecture, DPCK spans 6 to 203; it reads KVAITGGLSC…ELYQELKIYI (198 aa). 14–19 is an ATP binding site; that stretch reads SCGKSS.

It belongs to the CoaE family.

Its subcellular location is the cytoplasm. It carries out the reaction 3'-dephospho-CoA + ATP = ADP + CoA + H(+). It participates in cofactor biosynthesis; coenzyme A biosynthesis; CoA from (R)-pantothenate: step 5/5. In terms of biological role, catalyzes the phosphorylation of the 3'-hydroxyl group of dephosphocoenzyme A to form coenzyme A. In Protochlamydia amoebophila (strain UWE25), this protein is Dephospho-CoA kinase.